A 156-amino-acid polypeptide reads, in one-letter code: Jun dimerization protein 2 (156 aa).

Positions 56–95 (KRPFDAIKSEDDDDDERKKRRREKNKVAAARCRNRKKERT) are disordered. A bZIP domain is found at 70–133 (DERKKRRREK…QQLIVMLNLH (64 aa)). The interval 72 to 94 (RKKRRREKNKVAAARCRNRKKER) is basic motif. The leucine-zipper stretch occupies residues 98–126 (LQKESERLEMLNSDLKSQIEELKSERQQL).

It belongs to the bZIP family. ATF subfamily.

It is found in the nucleus. In terms of biological role, component of the AP-1 transcription factor that represses transactivation mediated by the Jun family of proteins. This is Jun dimerization protein 2 (jdp2) from Danio rerio (Zebrafish).